Consider the following 252-residue polypeptide: Triosephosphate isomerase (252 aa).

Residue 9–11 (NWK) coordinates substrate. Residue histidine 95 is the Electrophile of the active site. The active-site Proton acceptor is the glutamate 167. Residues glycine 173, serine 211, and 232–233 (GG) each bind substrate.

It belongs to the triosephosphate isomerase family. In terms of assembly, homodimer.

It is found in the cytoplasm. It catalyses the reaction D-glyceraldehyde 3-phosphate = dihydroxyacetone phosphate. The protein operates within carbohydrate biosynthesis; gluconeogenesis. Its pathway is carbohydrate degradation; glycolysis; D-glyceraldehyde 3-phosphate from glycerone phosphate: step 1/1. Functionally, involved in the gluconeogenesis. Catalyzes stereospecifically the conversion of dihydroxyacetone phosphate (DHAP) to D-glyceraldehyde-3-phosphate (G3P). This Marinobacter nauticus (strain ATCC 700491 / DSM 11845 / VT8) (Marinobacter aquaeolei) protein is Triosephosphate isomerase.